The sequence spans 196 residues: Imidazoleglycerol-phosphate dehydratase (196 aa).

It belongs to the imidazoleglycerol-phosphate dehydratase family.

The protein resides in the cytoplasm. It carries out the reaction D-erythro-1-(imidazol-4-yl)glycerol 3-phosphate = 3-(imidazol-4-yl)-2-oxopropyl phosphate + H2O. It functions in the pathway amino-acid biosynthesis; L-histidine biosynthesis; L-histidine from 5-phospho-alpha-D-ribose 1-diphosphate: step 6/9. The protein is Imidazoleglycerol-phosphate dehydratase of Moorella thermoacetica (strain ATCC 39073 / JCM 9320).